The sequence spans 299 residues: Exosome complex component rrp42 (299 aa).

The protein belongs to the RNase PH family. In terms of assembly, component of the RNA exosome complex. Specifically part of the catalytically inactive RNA exosome core complex (Exo-9) which may associate with the catalytic subunits rrp6 and dis3 in cytoplasmic- and nuclear-specific RNA exosome complex forms. Exo-9 is formed by a hexameric base ring of RNase PH domain-containing subunits and a cap ring consisting of csl4, rrp4 and rrp40.

It localises to the cytoplasm. The protein resides in the nucleus. The protein localises to the nucleolus. Functionally, non-catalytic component of the RNA exosome complex which has 3'-&gt;5' exoribonuclease activity and participates in a multitude of cellular RNA processing and degradation events. In the nucleus, the RNA exosome complex is involved in proper maturation of stable RNA species such as rRNA, snRNA and snoRNA, in the elimination of RNA processing by-products and non-coding 'pervasive' transcripts, such as antisense RNA species and cryptic unstable transcripts (CUTs), and of mRNAs with processing defects, thereby limiting or excluding their export to the cytoplasm. In the cytoplasm, the RNA exosome complex is involved in general mRNA turnover and in RNA surveillance pathways, preventing translation of aberrant mRNAs. The catalytic inactive RNA exosome core complex of 9 subunits (Exo-9) is proposed to play a pivotal role in the binding and presentation of RNA for ribonucleolysis, and to serve as a scaffold for the association with catalytic subunits and accessory proteins or complexes. ski6 is part of the hexameric ring of RNase PH domain-containing subunits proposed to form a central channel which threads RNA substrates for degradation. In Schizosaccharomyces pombe (strain 972 / ATCC 24843) (Fission yeast), this protein is Exosome complex component rrp42 (rrp42).